Here is a 191-residue protein sequence, read N- to C-terminus: GDP-mannose pyrophosphatase (191 aa).

GDP-alpha-D-mannose-binding positions include Tyr-17, 38–40 (KRE), Arg-67, and 85–87 (AGL). In terms of domain architecture, Nudix hydrolase spans 43-180 (DRGNGATILL…EIRDGKTVLL (138 aa)). Mg(2+)-binding residues include Ala-85, Glu-100, and Glu-104. The Nudix box motif lies at 86–106 (GLLDNDEPEVCIRKEAIEETG). GDP-alpha-D-mannose is bound by residues Glu-104, Glu-127, 150–151 (DE), and Lys-176. Residue Glu-151 participates in Mg(2+) binding.

Belongs to the Nudix hydrolase family. NudK subfamily. Homodimer. Mg(2+) is required as a cofactor.

It catalyses the reaction GDP-alpha-D-mannose + H2O = alpha-D-mannose 1-phosphate + GMP + 2 H(+). In terms of biological role, nucleoside diphosphate sugar hydrolase that hydrolyzes GDP-mannose as its preferred substrate, yielding GMP and mannose-1-phosphate. This is GDP-mannose pyrophosphatase (nudK) from Salmonella arizonae (strain ATCC BAA-731 / CDC346-86 / RSK2980).